The chain runs to 1104 residues: Partner and localizer of BRCA2 (1104 aa).

Positions 1 to 157 (MEELSGKPLS…WEKSSVSQEK (157 aa)) are required for its oligomerization and is important for its focal concentration at DNA damage sites. The interaction with RAD51 stretch occupies residues 1 to 195 (MEELSGKPLS…TPVSEKTHLL (195 aa)). The segment at 1–308 (MEELSGKPLS…RAHGQLPGSP (308 aa)) is interaction with BRCA1. Residues 9 to 48 (LSYAEKEKLKEKLAFLKKEYSRTLARLQRAKRAEKAKNSK) adopt a coiled-coil conformation. Positions 39 to 52 (KRAEKAKNSKKAIE) are enriched in basic and acidic residues. Disordered regions lie at residues 39-91 (KRAE…TGEN), 122-157 (GQLL…SQEK), and 243-272 (PSCT…TQGP). Polar residues-rich tracts occupy residues 59 to 70 (EASSQLSHSESI) and 138 to 154 (NTLP…SSVS). Serine 274 is subject to Phosphoserine. Residues 304-354 (LPGSPNSCSVNDLTHSNLPANSTPNSKSLKSPSNTVDERNEPLQEDEILGP) form a disordered region. The span at 306 to 338 (GSPNSCSVNDLTHSNLPANSTPNSKSLKSPSNT) shows a compositional bias: polar residues. Serine 364 is subject to Phosphoserine. The segment at 374–424 (SCTMLEGLLFPAEYYVRTTRRMSDCQRKIALEAVIQSHLGVKKKELKKKTK) is chAM (Chromatin-association motif); required for chromatin association, mediates nucleosome association. Disordered stretches follow at residues 417–494 (KELK…SART) and 581–730 (LQRD…TPLP). Position 432 is a phosphoserine (serine 432). The span at 446-462 (TSTGQSSSGSLSQKLLS) shows a compositional bias: low complexity. A compositionally biased stretch (basic residues) spans 483 to 492 (RGHRGKRKSA). The segment covering 664-713 (TLSTEAAQPCSTSQPPLLGDTNSLVNNSKQCNSSACSPKPDTNLQASGRQ) has biased composition (polar residues). Residues 693–1104 (QCNSSACSPK…DGNIFIYRYF (412 aa)) form a required for interaction with POLH and POLH DNA synthesis stimulation region. The tract at residues 771-1104 (GNLQLVSELK…DGNIFIYRYF (334 aa)) is interaction with RAD51 and BRCA2. Residues 771-1104 (GNLQLVSELK…DGNIFIYRYF (334 aa)) are interaction with RAD51, BRCA2 and POLH. 7 WD repeats span residues 772–833 (NLQL…WHFT), 835–879 (VPVL…QVLL), 880–927 (KSGD…LMPP), 928–970 (DETV…MHID), 976–1027 (SVCH…LLCS), 1033–1071 (AGRF…LLPP), and 1073–1104 (SDQS…YRYF).

Homooligomer; dissociated upon DNA damage thus allowing association with BRCA1. Oligomerization is essential for its focal accumulation at DNA breaks. Part of a BRCA complex containing BRCA1, BRCA2 and PALB2. Interacts with BRCA1 and this interaction is essential for its function in HRR. Interacts with RAD51AP1 and MORF4L1/MRG15. Component of the homologous recombination repair (HR) complex composed of ERCC5/XPG, BRCA2, PALB2, DSS1 and RAD51. Within the complex, interacts with ERCC5/XPG and BRCA2. Interacts with BRCA2, RAD51C, RAD51 and XRCC3; the interactions are direct and it may serve as a scaffold for a HR complex containing PALB2, BRCA2, RAD51C, RAD51 and XRCC3. Interacts with POLH; the interaction is direct.

The protein localises to the nucleus. In terms of biological role, plays a critical role in homologous recombination repair (HRR) through its ability to recruit BRCA2 and RAD51 to DNA breaks. Strongly stimulates the DNA strand-invasion activity of RAD51, stabilizes the nucleoprotein filament against a disruptive BRC3-BRC4 polypeptide and helps RAD51 to overcome the suppressive effect of replication protein A (RPA). Functionally cooperates with RAD51AP1 in promoting of D-loop formation by RAD51. Serves as the molecular scaffold in the formation of the BRCA1-PALB2-BRCA2 complex which is essential for homologous recombination. Via its WD repeats is proposed to scaffold a HR complex containing RAD51C and BRCA2 which is thought to play a role in HR-mediated DNA repair. Essential partner of BRCA2 that promotes the localization and stability of BRCA2. Also enables its recombinational repair and checkpoint functions of BRCA2. May act by promoting stable association of BRCA2 with nuclear structures, allowing BRCA2 to escape the effects of proteasome-mediated degradation. Binds DNA with high affinity for D loop, which comprises single-stranded, double-stranded and branched DNA structures. May play a role in the extension step after strand invasion at replication-dependent DNA double-strand breaks; together with BRCA2 is involved in both POLH localization at collapsed replication forks and DNA polymerization activity. This chain is Partner and localizer of BRCA2 (Palb2), found in Mus musculus (Mouse).